Here is a 292-residue protein sequence, read N- to C-terminus: Type II methyltransferase M.SmaI (292 aa).

The segment at 110–130 (WRDKDDKNKGRAMSYRPPTPE) is disordered.

It belongs to the N(4)/N(6)-methyltransferase family. N(4) subfamily.

It carries out the reaction a 2'-deoxycytidine in DNA + S-adenosyl-L-methionine = an N(4)-methyl-2'-deoxycytidine in DNA + S-adenosyl-L-homocysteine + H(+). In terms of biological role, a beta subtype methylase thatnrecognizes the double-stranded sequence 5'-CCCGGG-3', methylates C-2 on both strands, and protects the DNA from cleavage by the SmaI endonuclease. The chain is Type II methyltransferase M.SmaI (smaIM) from Serratia marcescens.